Reading from the N-terminus, the 1396-residue chain is ATP-dependent helicase/nuclease subunit A (1396 aa).

A disordered region spans residues 1-25; sequence MNREALCHDDPIGHDRLRPDSIPRD. The UvrD-like helicase ATP-binding domain occupies 26-532; sequence PKWTDEQWQA…IDLAKNFRSR (507 aa). 47–54 lines the ATP pocket; it reads AAAGAGKT. Disordered regions lie at residues 590–649 and 1171–1205; these read DADG…GQPT and HSPE…PSPD. In terms of domain architecture, UvrD-like helicase C-terminal spans 615 to 920; that stretch reads HKNIAKAGES…RIMSIHKSKG (306 aa). The span at 1181 to 1199 shows a compositional bias: low complexity; sequence TPPSLEIPPSLETPPSLET.

Belongs to the helicase family. AddA subfamily. Heterodimer of AddA and AddB/RexB. The cofactor is Mg(2+).

It carries out the reaction Couples ATP hydrolysis with the unwinding of duplex DNA by translocating in the 3'-5' direction.. The enzyme catalyses ATP + H2O = ADP + phosphate + H(+). In terms of biological role, the heterodimer acts as both an ATP-dependent DNA helicase and an ATP-dependent, dual-direction single-stranded exonuclease. Recognizes the chi site generating a DNA molecule suitable for the initiation of homologous recombination. The AddA nuclease domain is required for chi fragment generation; this subunit has the helicase and 3' -&gt; 5' nuclease activities. The sequence is that of ATP-dependent helicase/nuclease subunit A from Heliobacterium modesticaldum (strain ATCC 51547 / Ice1).